A 65-amino-acid polypeptide reads, in one-letter code: Bacteriocin amylovorin-L (65 aa).

Positions 1 to 15 (MKQLNSEQLQNIIGG) are excised as a propeptide. Residues 39–59 (LGGVWGAVIGGVGGAAVCGLA) traverse the membrane as a helical segment.

Active lactobin is composed of two different peptides, one which is lactobin A.

Its subcellular location is the secreted. It localises to the host cell membrane. Its function is as follows. This heat stable bacteriocin inhibits the growth of closely related Lactobacillus species. It may act as a pore-forming protein, creating a channel in the cell membrane. It kills Lactobacillus helveticus ATCC 15009, but displays no activity towards Listeria species. The polypeptide is Bacteriocin amylovorin-L (amyL) (Lactobacillus amylovorus).